The primary structure comprises 694 residues: N,N-dimethylglycine/sarcosine dehydrogenase (694 aa).

It in the N-terminal section; belongs to the NADH:flavin oxidoreductase/NADH oxidase family. In terms of assembly, monomer. The purified enzyme exists in the form of a monomer, dimer or polymer under non-denaturing conditions, but only the monomeric protein exhibits enzyme activity. FAD is required as a cofactor. It depends on NAD(+) as a cofactor. NADP(+) serves as cofactor.

It localises to the cytoplasm. It catalyses the reaction oxidized 2[4Fe-4S]-[ferredoxin] + N,N-dimethylglycine + H2O = reduced 2[4Fe-4S]-[ferredoxin] + sarcosine + formaldehyde + 2 H(+). It carries out the reaction oxidized 2[4Fe-4S]-[ferredoxin] + sarcosine + H2O = reduced 2[4Fe-4S]-[ferredoxin] + formaldehyde + glycine + 2 H(+). With respect to regulation, ca(2+) increases the activity by 12%, while the other metal ions tested have no or slightly inhibitory effects. The chelating agent EDTA inhibits the activity by 33%. In terms of biological role, involved in degradation of glycine betaine. Catalyzes the demethylation of both N,N-dimethylglycine (DMG) and sarcosine, releasing formaldehyde and forming glycine as the final product. Does not show activity toward trimethylamine (TMA), histamine, glycine betaine (GB) or choline. The C-N bond in DMG is probably oxidized by removal of a hydride equivalent to form a labile imine intermediate, which is then spontaneously hydrolyzed in the presence of water, producing sarcosine and formaldehyde. The two protons subtracted from DMG are transferred to the non-covalently bound FAD, resulting in the reduced form of FAD, which is subsequently reoxidized by coupling with reduction of the enzyme-bound NAD(P)(+). Regeneration of NAD(P)(+) is achieved by electron transfer to the [4Fe-4S] cluster in the probable membrane-anchored ferredoxin csal_0991. This Chromohalobacter salexigens (strain ATCC BAA-138 / DSM 3043 / CIP 106854 / NCIMB 13768 / 1H11) protein is N,N-dimethylglycine/sarcosine dehydrogenase.